The following is a 339-amino-acid chain: Phosphatidylglycerol--prolipoprotein diacylglyceryl transferase (339 aa).

The next 3 membrane-spanning stretches (helical) occupy residues 43 to 63 (FTIA…YWLG), 81 to 101 (ILWM…LTSW), and 121 to 141 (NGGI…IYFA). Arg-167 serves as a coordination point for a 1,2-diacyl-sn-glycero-3-phospho-(1'-sn-glycerol). Transmembrane regions (helical) follow at residues 231 to 251 (FTQL…YFWL) and 300 to 320 (LWTD…WMLW).

The protein belongs to the Lgt family.

It is found in the cell membrane. The enzyme catalyses L-cysteinyl-[prolipoprotein] + a 1,2-diacyl-sn-glycero-3-phospho-(1'-sn-glycerol) = an S-1,2-diacyl-sn-glyceryl-L-cysteinyl-[prolipoprotein] + sn-glycerol 1-phosphate + H(+). The protein operates within protein modification; lipoprotein biosynthesis (diacylglyceryl transfer). Functionally, catalyzes the transfer of the diacylglyceryl group from phosphatidylglycerol to the sulfhydryl group of the N-terminal cysteine of a prolipoprotein, the first step in the formation of mature lipoproteins. In Deinococcus radiodurans (strain ATCC 13939 / DSM 20539 / JCM 16871 / CCUG 27074 / LMG 4051 / NBRC 15346 / NCIMB 9279 / VKM B-1422 / R1), this protein is Phosphatidylglycerol--prolipoprotein diacylglyceryl transferase.